A 1798-amino-acid polypeptide reads, in one-letter code: U3 small nucleolar RNA-associated protein 10 (1798 aa).

The HEAT 1 repeat unit spans residues 583-620 (LDFQALLPFLLVTLTDPSERVRREAAAALAAVGSLYKK). A run of 2 helical transmembrane segments spans residues 942–962 (IQSGMSYLLSLTLGSLLAIVN) and 998–1018 (ALLLVAGLSVIAPELVLHSVM). HEAT repeat units lie at residues 1042 to 1079 (QTIDQVVPALIQSLRDQKRDVVSGTSELLLSFTAAFEH), 1249 to 1286 (LTLVDFLDTIEVLLERPNDELRRKVLRLLEGRLRQNPE), 1293 to 1331 (IRVLDFLPTLVDIIRNSTDILLKHAAVACIDRIAEKYGK), and 1754 to 1791 (ALLPEMLPYISELMEDEDENVEREVRKWVKQIENVLGE).

This sequence belongs to the HEATR1/UTP10 family. As to quaternary structure, component of the ribosomal small subunit (SSU) processome.

It localises to the nucleus. The protein resides in the nucleolus. It is found in the membrane. Functionally, involved in nucleolar processing of pre-18S ribosomal RNA. Involved in ribosome biosynthesis. The protein is U3 small nucleolar RNA-associated protein 10 of Aspergillus fumigatus (strain ATCC MYA-4609 / CBS 101355 / FGSC A1100 / Af293) (Neosartorya fumigata).